A 338-amino-acid polypeptide reads, in one-letter code: Lipoate-protein ligase A (338 aa).

The BPL/LPL catalytic domain occupies 29 to 216 (PATQRVLFLW…AFFAHYGERV (188 aa)). ATP is bound by residues arginine 71, 76 to 79 (GAVF), and lysine 134. Residue lysine 134 coordinates (R)-lipoate.

It belongs to the LplA family. As to quaternary structure, monomer.

It is found in the cytoplasm. It catalyses the reaction L-lysyl-[lipoyl-carrier protein] + (R)-lipoate + ATP = N(6)-[(R)-lipoyl]-L-lysyl-[lipoyl-carrier protein] + AMP + diphosphate + H(+). It participates in protein modification; protein lipoylation via exogenous pathway; protein N(6)-(lipoyl)lysine from lipoate: step 1/2. It functions in the pathway protein modification; protein lipoylation via exogenous pathway; protein N(6)-(lipoyl)lysine from lipoate: step 2/2. Catalyzes both the ATP-dependent activation of exogenously supplied lipoate to lipoyl-AMP and the transfer of the activated lipoyl onto the lipoyl domains of lipoate-dependent enzymes. In Escherichia fergusonii (strain ATCC 35469 / DSM 13698 / CCUG 18766 / IAM 14443 / JCM 21226 / LMG 7866 / NBRC 102419 / NCTC 12128 / CDC 0568-73), this protein is Lipoate-protein ligase A.